Here is a 244-residue protein sequence, read N- to C-terminus: tRNA pseudouridine synthase A (244 aa).

Asp-52 serves as the catalytic Nucleophile. Tyr-110 is a binding site for substrate.

The protein belongs to the tRNA pseudouridine synthase TruA family. Homodimer.

It carries out the reaction uridine(38/39/40) in tRNA = pseudouridine(38/39/40) in tRNA. Functionally, formation of pseudouridine at positions 38, 39 and 40 in the anticodon stem and loop of transfer RNAs. This chain is tRNA pseudouridine synthase A, found in Acetivibrio thermocellus (strain ATCC 27405 / DSM 1237 / JCM 9322 / NBRC 103400 / NCIMB 10682 / NRRL B-4536 / VPI 7372) (Clostridium thermocellum).